The following is a 2543-amino-acid chain: Polyketide synthase PksR (2543 aa).

Residues 165–269 form a methyltransferase region; that stretch reads LEIGAGTGGT…KAVLKKNGLL (105 aa). Residues 376–452 enclose the Carrier 1 domain; it reads SLIEQTAQFV…ELVEYLVKGH (77 aa). S413 is subject to O-(pantetheine 4'-phosphoryl)serine. A disordered region spans residues 465-485; it reads TKPAKNEAPLQTERTDPNKPF. The Ketosynthase family 3 (KS3) 1 domain maps to 527–959; sequence TEDIAIIGVS…GAYANLIIEE (433 aa). C700 acts as the For beta-ketoacyl synthase 1 activity in catalysis. The N-terminal hotdog fold stretch occupies residues 1114–1242; that stretch reads HFDVSSINEK…GQCGIGSFEP (129 aa). The PKS/mFAS DH domain occupies 1114–1397; that stretch reads HFDVSSINEK…LKQLRISNQR (284 aa). Residues 1255–1397 form a C-terminal hotdog fold region; the sequence is TKLHHIDQMY…LKQLRISNQR (143 aa). The 79-residue stretch at 1407 to 1485 folds into the Carrier 2 domain; sequence SNLKARIRSY…ELIDFFADKH (79 aa). S1445 carries the post-translational modification O-(pantetheine 4'-phosphoryl)serine. The 419-residue stretch at 1528 to 1946 folds into the Ketosynthase family 3 (KS3) 2 domain; that stretch reads ADGIAIIGMS…GVNAHVILEE (419 aa). Catalysis depends on for beta-ketoacyl synthase 2 activity residues C1680, H1815, and H1862. Residues 2134–2208 form the Carrier 3 domain; that stretch reads RINNSSDHHI…DMMDLIAKKQ (75 aa). O-(pantetheine 4'-phosphoryl)serine is present on S2168. The thioesterase stretch occupies residues 2234-2514; the sequence is RPVFWFHGGV…EFCEKLYSNR (281 aa).

Pantetheine 4'-phosphate is required as a cofactor.

The protein localises to the cytoplasm. Its pathway is antibiotic biosynthesis; bacillaene biosynthesis. In terms of biological role, involved in some intermediate steps for the synthesis of the antibiotic polyketide bacillaene which is involved in secondary metabolism. This is Polyketide synthase PksR (pksR) from Bacillus subtilis (strain 168).